The chain runs to 204 residues: Imidazoleglycerol-phosphate dehydratase (204 aa).

The protein belongs to the imidazoleglycerol-phosphate dehydratase family.

Its subcellular location is the cytoplasm. It catalyses the reaction D-erythro-1-(imidazol-4-yl)glycerol 3-phosphate = 3-(imidazol-4-yl)-2-oxopropyl phosphate + H2O. It functions in the pathway amino-acid biosynthesis; L-histidine biosynthesis; L-histidine from 5-phospho-alpha-D-ribose 1-diphosphate: step 6/9. This Corynebacterium jeikeium (strain K411) protein is Imidazoleglycerol-phosphate dehydratase.